The primary structure comprises 963 residues: Importin-13 (963 aa).

HEAT repeat units lie at residues 24–54, 56–88, 95–135, 142–179, 194–231, 236–268, 276–325, 330–372, 375–438, 440–476, 487–522, 524–558, 562–600, 603–648, 676–716, 720–754, 761–803, 815–845, 860–893, and 897–931; these read ESVEKALHQLYYDPNIENKNLAQKWLMQAQV, PQAWHFSWQLLQPDKVPEIQYFGASALPIKTSR, TDQY…LSMM, AVADMVRLFQAEDSPVDGQGRCLALLELLTVLPEEFQT, LAVECGAVFPLLEQLLQQPSSPSCVRQKVLKCFSSWVQ, LQDCEALIQAAFAALQDSELFDSSVEAIVNAIS, VNTL…ALLD, WQSF…DDIL, EAEK…YEML, AELLSNLYDKLGRLLTSSEEPYSWQHTEALLYGFQSI, VVPGLIGLIPRISISNVQLADTVMFTIGALSEWLAD, PVMINSVLPLVLHALGNPEPSVSSVSTLKKICREC, LPPYAANIVAVSQDVLMKQIHKTSQCMWLMQALGFLLSA, VEEI…SNLF, PVVV…VKTL, FAPMVPQLCEMLGRMYSTIPQASALDLTRQLVHIF, FPPI…ALKR, VKAVFQCAVLALKFPEAPTVKASCGFFTELL, EDGRMLLIAVLEAIGGQASRSLMDCFADILFALN, and FSLLSMWIKEALQPPGFPSARLSPEQKDTFSQQIL. Residues 45-111 form the Importin N-terminal domain; sequence AQKWLMQAQV…KAQLFTQITR (67 aa).

Belongs to the importin beta family. As to quaternary structure, interacts with UBC9, RAN, RBM8A, eIF-1A and PAX6.

The protein resides in the cytoplasm. Its subcellular location is the nucleus. Functionally, functions in nuclear protein import as nuclear transport receptor. Serves as receptor for nuclear localization signals (NLS) in cargo substrates. Is thought to mediate docking of the importin/substrate complex to the nuclear pore complex (NPC) through binding to nucleoporin and the complex is subsequently translocated through the pore by an energy requiring, Ran-dependent mechanism. At the nucleoplasmic side of the NPC, Ran binds to the importin, the importin/substrate complex dissociates and importin is re-exported from the nucleus to the cytoplasm where GTP hydrolysis releases Ran. The directionality of nuclear import is thought to be conferred by an asymmetric distribution of the GTP- and GDP-bound forms of Ran between the cytoplasm and nucleus. Mediates the nuclear import of UBC9, the RBM8A/MAGOH complex, PAX6 and probably other members of the paired homeobox family. Also mediates nuclear export of eIF-1A, and the cytoplasmic release of eIF-1A is triggered by the loading of import substrates onto IPO13. This chain is Importin-13 (IPO13), found in Pongo abelii (Sumatran orangutan).